The primary structure comprises 644 residues: Macrolide export ATP-binding/permease protein MacB (644 aa).

The 239-residue stretch at 4-242 folds into the ABC transporter domain; sequence IECKNINRYF…SNVGRIREKA (239 aa). ATP is bound at residue 40–47; the sequence is GQSGSGKS. 4 consecutive transmembrane segments (helical) span residues 270–290, 524–544, 574–594, and 607–627; these read LLTM…VALG, IALI…LVSV, LICV…SLVF, and AMSV…FGFM.

It belongs to the ABC transporter superfamily. Macrolide exporter (TC 3.A.1.122) family. Homodimer.

It localises to the cell inner membrane. Non-canonical ABC transporter that contains transmembrane domains (TMD), which form a pore in the inner membrane, and an ATP-binding domain (NBD), which is responsible for energy generation. Confers resistance against macrolides. The polypeptide is Macrolide export ATP-binding/permease protein MacB (Neisseria meningitidis serogroup B (strain ATCC BAA-335 / MC58)).